We begin with the raw amino-acid sequence, 251 residues long: Coproheme decarboxylase (251 aa).

Residues arginine 133, 147–151, histidine 174, glutamine 187, and serine 225 each bind Fe-coproporphyrin III; that span reads YPMSK. Tyrosine 147 is an active-site residue.

The protein belongs to the ChdC family. Type 1 subfamily. Fe-coproporphyrin III serves as cofactor.

It carries out the reaction Fe-coproporphyrin III + 2 H2O2 + 2 H(+) = heme b + 2 CO2 + 4 H2O. It catalyses the reaction Fe-coproporphyrin III + H2O2 + H(+) = harderoheme III + CO2 + 2 H2O. The catalysed reaction is harderoheme III + H2O2 + H(+) = heme b + CO2 + 2 H2O. It functions in the pathway porphyrin-containing compound metabolism; protoheme biosynthesis. Its function is as follows. Involved in coproporphyrin-dependent heme b biosynthesis. Catalyzes the decarboxylation of Fe-coproporphyrin III (coproheme) to heme b (protoheme IX), the last step of the pathway. The reaction occurs in a stepwise manner with a three-propionate intermediate. The chain is Coproheme decarboxylase from Listeria monocytogenes serotype 4b (strain CLIP80459).